The chain runs to 202 residues: Small ribosomal subunit protein uS4c (202 aa).

The S4 RNA-binding domain occupies 90-153 (MRLDNIIFRL…KSEAIISKNI (64 aa)).

Belongs to the universal ribosomal protein uS4 family. In terms of assembly, part of the 30S ribosomal subunit. Contacts protein S5. The interaction surface between S4 and S5 is involved in control of translational fidelity.

The protein localises to the plastid. It is found in the chloroplast. Its function is as follows. One of the primary rRNA binding proteins, it binds directly to 16S rRNA where it nucleates assembly of the body of the 30S subunit. In terms of biological role, with S5 and S12 plays an important role in translational accuracy. This chain is Small ribosomal subunit protein uS4c (rps4), found in Leucodon sciuroides (Moss).